We begin with the raw amino-acid sequence, 450 residues long: MANQLRETHQSLKKKYRELIDGESSLPPEKRNQVNLAQLLMDSRERNKQLAEEVKEVTQRLSETQGDNKLLRMTITKQRLGDDEVGIRHFPAHEREDLVRQLEKAALHREELEHTLKTLSDELQDVKAERTVFKEKSKRLNLELNHILGGQEKRIIDVDALCMENKYLHERLKQVQEEVSLLKSNIQKYKTALDRRKNPEIGGKSSSRSLTGVLSPKQVHGFLSEENGCSLPATPQSISDLKSLATALLETIHEKNIIIQHQRQTNRILGNRVADLERKLKTLEISGLWSLPDDRTGRGGPSLWERDTAGDDSFPNMWRGSRPGPDGGAGEEDTPVTREESDPSGTRTNGQVGTQLKEKKTACCPVTEVIAAVEELCVVLEAEDAVLALDPAGLQLQWTQTPSVTLEQSACKNTDIKNSAGSPATDLGEISEGAAVKIEPIEESGSSFVS.

Coiled-coil stretches lie at residues 1–197 (MANQ…DRRK) and 259–286 (IQHQ…LEIS). Positions 290–358 (SLPDDRTGRG…NGQVGTQLKE (69 aa)) are disordered. A compositionally biased stretch (polar residues) spans 343-354 (PSGTRTNGQVGT).

It belongs to the CCDC149 family.

The chain is Coiled-coil domain-containing protein 149-A (ccdc149a) from Danio rerio (Zebrafish).